The sequence spans 239 residues: Peptidyl-tRNA hydrolase (239 aa).

Tyr-14 is a binding site for tRNA. His-19 (proton acceptor) is an active-site residue. Residues Phe-64, Asn-66, and Asn-112 each coordinate tRNA.

The protein belongs to the PTH family. In terms of assembly, monomer.

Its subcellular location is the cytoplasm. The catalysed reaction is an N-acyl-L-alpha-aminoacyl-tRNA + H2O = an N-acyl-L-amino acid + a tRNA + H(+). Functionally, hydrolyzes ribosome-free peptidyl-tRNAs (with 1 or more amino acids incorporated), which drop off the ribosome during protein synthesis, or as a result of ribosome stalling. In terms of biological role, catalyzes the release of premature peptidyl moieties from peptidyl-tRNA molecules trapped in stalled 50S ribosomal subunits, and thus maintains levels of free tRNAs and 50S ribosomes. The protein is Peptidyl-tRNA hydrolase of Rhizobium meliloti (strain 1021) (Ensifer meliloti).